The primary structure comprises 63 residues: Large ribosomal subunit protein bL28 (63 aa).

Residues 1-20 form a disordered region; it reads MSRRCAITGKGPMVGNNVSH.

It belongs to the bacterial ribosomal protein bL28 family.

The polypeptide is Large ribosomal subunit protein bL28 (Campylobacter curvus (strain 525.92)).